The following is a 222-amino-acid chain: Histone H1.5 (222 aa).

Over residues 1–16 the composition is skewed to low complexity; sequence MSETAPAETTAPAPVE. A disordered region spans residues 1–55; the sequence is MSETAPAETTAPAPVEKSPAKKKTKKAGAAKRKATGPPVSELITKAVSASKERGG. Ser-2 is subject to N-acetylserine. Ser-2 is subject to Phosphoserine. Lys-17 bears the N6-acetyllysine mark. Ser-18 carries the phosphoserine modification. Positions 20–34 are enriched in basic residues; it reads AKKKTKKAGAAKRKA. N6-methyllysine is present on Lys-26. Lys-33 is subject to N6-(beta-hydroxybutyryl)lysine; alternate. Lys-33 bears the N6-succinyllysine; alternate mark. Residue Thr-35 is modified to Phosphothreonine. The 74-residue stretch at 35–108 folds into the H15 domain; it reads TGPPVSELIT…GASGSFKLNK (74 aa). Lys-45 is subject to N6-acetyllysine. Lys-51 is modified (N6-(beta-hydroxybutyryl)lysine). Arg-53 carries the citrulline modification. Lys-63 carries the N6-(beta-hydroxybutyryl)lysine modification. Lys-74 carries the N6-acetyllysine modification. An N6-(beta-hydroxybutyryl)lysine mark is found at Lys-84, Lys-89, and Lys-105. Residues 94-222 are disordered; that stretch reads QTKGTGASGS…KVKKAVSKKK (129 aa). A compositionally biased stretch (basic residues) spans 118 to 129; sequence KAKKTGAAKAKK. Phosphothreonine is present on residues Thr-134 and Thr-151. Over residues 136-157 the composition is skewed to basic residues; sequence KKPKKTAGAKKTVKKTPKKAKK. Lys-164 carries the N6-acetyllysine modification. Over residues 165–183 the composition is skewed to basic residues; it reads KVTKSPKKAKAAAKPKKAT. Phosphoserine is present on residues Ser-169 and Ser-185. Positions 190-222 are enriched in basic residues; that stretch reads KAVKSKASKPKVTKPKAAKPKAAKVKKAVSKKK.

It belongs to the histone H1/H5 family. In terms of assembly, interacts with MSX1. Post-translationally, H1 histones are progressively phosphorylated during the cell cycle, becoming maximally phosphorylated during late G2 phase and M phase, and being dephosphorylated sharply thereafter. In terms of processing, citrullination at Arg-53 (H1R54ci) by PADI4 takes place within the DNA-binding site of H1 and results in its displacement from chromatin and global chromatin decondensation, thereby promoting pluripotency and stem cell maintenance.

The protein resides in the nucleus. It is found in the chromosome. Functionally, histone H1 protein binds to linker DNA between nucleosomes forming the macromolecular structure known as the chromatin fiber. Histones H1 are necessary for the condensation of nucleosome chains into higher-order structured fibers. Also acts as a regulator of individual gene transcription through chromatin remodeling, nucleosome spacing and DNA methylation. The polypeptide is Histone H1.5 (H1-5) (Rattus norvegicus (Rat)).